The sequence spans 165 residues: Lipoprotein signal peptidase (165 aa).

Helical transmembrane passes span 11 to 31 (YWVLALAAIVLDQWSKWAVLS), 41 to 61 (VIPSFFDLTLVYNPGAAFSFL), 64 to 84 (QGGWQKYFFLVLAVAVSAYLV), and 92 to 112 (FATLGKTGAAMIIGGALGNVI). Catalysis depends on residues Asp-122 and Asp-140. Residues 132–152 (FYPAFNIADSFICVGAVLAVL) traverse the membrane as a helical segment.

It belongs to the peptidase A8 family.

It is found in the cell inner membrane. The enzyme catalyses Release of signal peptides from bacterial membrane prolipoproteins. Hydrolyzes -Xaa-Yaa-Zaa-|-(S,diacylglyceryl)Cys-, in which Xaa is hydrophobic (preferably Leu), and Yaa (Ala or Ser) and Zaa (Gly or Ala) have small, neutral side chains.. The protein operates within protein modification; lipoprotein biosynthesis (signal peptide cleavage). This protein specifically catalyzes the removal of signal peptides from prolipoproteins. The polypeptide is Lipoprotein signal peptidase (Neisseria meningitidis serogroup A / serotype 4A (strain DSM 15465 / Z2491)).